A 160-amino-acid chain; its full sequence is Transcription elongation factor GreA 2 (160 aa).

Positions 9 to 73 (MTEEGKVKLE…RIKTVEHMLQ (65 aa)) form a coiled coil.

The protein belongs to the GreA/GreB family.

Necessary for efficient RNA polymerase transcription elongation past template-encoded arresting sites. The arresting sites in DNA have the property of trapping a certain fraction of elongating RNA polymerases that pass through, resulting in locked ternary complexes. Cleavage of the nascent transcript by cleavage factors such as GreA or GreB allows the resumption of elongation from the new 3'terminus. GreA releases sequences of 2 to 3 nucleotides. The sequence is that of Transcription elongation factor GreA 2 from Lactiplantibacillus plantarum (strain ATCC BAA-793 / NCIMB 8826 / WCFS1) (Lactobacillus plantarum).